A 633-amino-acid chain; its full sequence is DNA-directed RNA polymerase subunit beta' (633 aa).

Residues Cys72, Cys74, Cys87, and Cys90 each coordinate Zn(2+). 3 residues coordinate Mg(2+): Asp468, Asp470, and Asp472.

This sequence belongs to the RNA polymerase beta' chain family. RpoC1 subfamily. As to quaternary structure, in plastids the minimal PEP RNA polymerase catalytic core is composed of four subunits: alpha, beta, beta', and beta''. When a (nuclear-encoded) sigma factor is associated with the core the holoenzyme is formed, which can initiate transcription. Mg(2+) serves as cofactor. It depends on Zn(2+) as a cofactor.

Its subcellular location is the plastid. It is found in the chloroplast. The enzyme catalyses RNA(n) + a ribonucleoside 5'-triphosphate = RNA(n+1) + diphosphate. Functionally, DNA-dependent RNA polymerase catalyzes the transcription of DNA into RNA using the four ribonucleoside triphosphates as substrates. In Cyanidium caldarium (Red alga), this protein is DNA-directed RNA polymerase subunit beta'.